The sequence spans 236 residues: 2-C-methyl-D-erythritol 4-phosphate cytidylyltransferase (236 aa).

Belongs to the IspD/TarI cytidylyltransferase family. IspD subfamily.

The enzyme catalyses 2-C-methyl-D-erythritol 4-phosphate + CTP + H(+) = 4-CDP-2-C-methyl-D-erythritol + diphosphate. It participates in isoprenoid biosynthesis; isopentenyl diphosphate biosynthesis via DXP pathway; isopentenyl diphosphate from 1-deoxy-D-xylulose 5-phosphate: step 2/6. Its function is as follows. Catalyzes the formation of 4-diphosphocytidyl-2-C-methyl-D-erythritol from CTP and 2-C-methyl-D-erythritol 4-phosphate (MEP). The sequence is that of 2-C-methyl-D-erythritol 4-phosphate cytidylyltransferase from Paraburkholderia phymatum (strain DSM 17167 / CIP 108236 / LMG 21445 / STM815) (Burkholderia phymatum).